A 316-amino-acid chain; its full sequence is Ribosomal RNA small subunit methyltransferase H (316 aa).

S-adenosyl-L-methionine is bound by residues 35-37 (AGH), Asp55, Phe84, Asp105, and Gln112.

This sequence belongs to the methyltransferase superfamily. RsmH family.

It localises to the cytoplasm. It catalyses the reaction cytidine(1402) in 16S rRNA + S-adenosyl-L-methionine = N(4)-methylcytidine(1402) in 16S rRNA + S-adenosyl-L-homocysteine + H(+). In terms of biological role, specifically methylates the N4 position of cytidine in position 1402 (C1402) of 16S rRNA. This Streptococcus pneumoniae (strain Hungary19A-6) protein is Ribosomal RNA small subunit methyltransferase H.